The chain runs to 358 residues: Peptide chain release factor 1 (358 aa).

An N5-methylglutamine modification is found at Gln-236.

It belongs to the prokaryotic/mitochondrial release factor family. In terms of processing, methylated by PrmC. Methylation increases the termination efficiency of RF1.

It localises to the cytoplasm. Functionally, peptide chain release factor 1 directs the termination of translation in response to the peptide chain termination codons UAG and UAA. The sequence is that of Peptide chain release factor 1 from Corynebacterium aurimucosum (strain ATCC 700975 / DSM 44827 / CIP 107346 / CN-1) (Corynebacterium nigricans).